A 656-amino-acid chain; its full sequence is Chaperone protein DnaK (656 aa).

The segment covering 590-605 (GGAAGGAAGGAAGGAA) has biased composition (gly residues). Residues 590–656 (GGAAGGAAGG…DGQPKPGPAA (67 aa)) form a disordered region. Residues 606 to 621 (GDAAGAAGDSTGDAAG) show a composition bias toward low complexity. Over residues 622-635 (AAGGPSEGPAGDAG) the composition is skewed to gly residues.

The protein belongs to the heat shock protein 70 family.

In terms of biological role, acts as a chaperone. In Cenarchaeum symbiosum (strain A), this protein is Chaperone protein DnaK.